A 276-amino-acid polypeptide reads, in one-letter code: Large ribosomal subunit protein uL2 (276 aa).

The interval proline 218–lysine 276 is disordered. The span at lysine 258–lysine 276 shows a compositional bias: basic residues.

The protein belongs to the universal ribosomal protein uL2 family. In terms of assembly, part of the 50S ribosomal subunit. Forms a bridge to the 30S subunit in the 70S ribosome.

One of the primary rRNA binding proteins. Required for association of the 30S and 50S subunits to form the 70S ribosome, for tRNA binding and peptide bond formation. It has been suggested to have peptidyltransferase activity; this is somewhat controversial. Makes several contacts with the 16S rRNA in the 70S ribosome. The polypeptide is Large ribosomal subunit protein uL2 (Finegoldia magna (strain ATCC 29328 / DSM 20472 / WAL 2508) (Peptostreptococcus magnus)).